We begin with the raw amino-acid sequence, 1346 residues long: Proline-rich protein 36 (1346 aa).

6 disordered regions span residues 1–403 (MDNK…TQLI), 426–512 (SVSS…QATP), 537–606 (PLTT…PSPL), 633–679 (PRQT…VSPL), 711–1155 (LETQ…AELA), and 1168–1240 (PPLA…RSPK). Over residues 10–26 (AGAAARTPAARAPGLLT) the composition is skewed to low complexity. The span at 27–40 (PRPPGSPRPPPPVT) shows a compositional bias: pro residues. 2 stretches are compositionally biased toward low complexity: residues 41–55 (PAAL…AVGR) and 86–97 (SSRNPASRPPAS). Residues 137–152 (SAEETVARGKATEAPK) show a composition bias toward basic and acidic residues. Over residues 165–177 (SGPTPGTPSPAMA) the composition is skewed to low complexity. Residues 191 to 203 (RPAPSARPRPPTE) are compositionally biased toward pro residues. A compositionally biased stretch (polar residues) spans 208-220 (SVSSASEHSTTEP). Low complexity-rich tracts occupy residues 235 to 255 (QRPA…PARS) and 293 to 312 (APAL…PSGT). Pro residues-rich tracts occupy residues 329–343 (ATLP…PPPA), 371–380 (PLAPPSPSAP), and 387–397 (PSPPATPPSQV). Positions 426–464 (SVSSPLQSMPPTQANPALPSLPTLLSPLATPPLSAMSPL) are enriched in low complexity. Residues 494-506 (TPPPQASPSPSPP) are compositionally biased toward pro residues. Residues 546 to 558 (PPLVSPSLLASPP) show a composition bias toward low complexity. The segment covering 559–578 (LQAPPHPQAPPSMTTPPMQA) has biased composition (pro residues). The segment covering 633 to 647 (PRQTQASLISPSRPA) has biased composition (polar residues). Positions 648–657 (STPPDSPPLQ) are enriched in pro residues. Low complexity predominate over residues 658-679 (APLSLPASPPLQTSLSPAVSPL). Over residues 724–733 (TPPASLTTPP) the composition is skewed to polar residues. Pro residues-rich tracts occupy residues 781–821 (ETPP…PALA) and 829–865 (PSPP…PPLS). Over residues 866-875 (PLATPSPQAP) the composition is skewed to low complexity. 3 stretches are compositionally biased toward pro residues: residues 887–917 (FSPP…PSQA), 926–997 (LQVP…PPAS), and 1004–1015 (AKPPPQAPPALA). Low complexity-rich tracts occupy residues 1029-1046 (FPGQ…MSPL), 1137-1146 (DSGPEGGAAA), and 1224-1239 (GKAA…SRSP). S1310 carries the post-translational modification Phosphoserine.

This Homo sapiens (Human) protein is Proline-rich protein 36.